A 288-amino-acid polypeptide reads, in one-letter code: Small ribosomal subunit protein uS3 (288 aa).

The KH type-2 domain maps to 38 to 106 (IRRMMSKGLE…QVQLNIIEVK (69 aa)). Positions 209–288 (PGRETPAEAP…TQPAETQQEG (80 aa)) are disordered. The segment covering 219–232 (SRPRRERGDRSERP) has biased composition (basic and acidic residues). The segment covering 249 to 264 (AGRAAATTIAQAAETP) has biased composition (low complexity). Residues 277-288 (AATQPAETQQEG) show a composition bias toward polar residues.

The protein belongs to the universal ribosomal protein uS3 family. In terms of assembly, part of the 30S ribosomal subunit. Forms a tight complex with proteins S10 and S14.

In terms of biological role, binds the lower part of the 30S subunit head. Binds mRNA in the 70S ribosome, positioning it for translation. The chain is Small ribosomal subunit protein uS3 from Salinispora tropica (strain ATCC BAA-916 / DSM 44818 / JCM 13857 / NBRC 105044 / CNB-440).